The chain runs to 207 residues: Ras-related protein Rab-7a (207 aa).

Threonine 2 is modified (N-acetylthreonine). Positions 17, 18, 19, 20, 21, 22, 23, 34, 35, 37, and 40 each coordinate GTP. Position 22 (threonine 22) interacts with Mg(2+). A Switch 1 motif is present at residues 28-41 (YVNKKFSNQYKATI). Positions 40 and 63 each coordinate Mg(2+). Position 66 (glycine 66) interacts with GTP. The Switch 2 motif lies at 67 to 82 (QERFQSLGVAFYRGAD). Phosphoserine is present on serine 72. Residues asparagine 125, lysine 126, aspartate 128, alanine 156, and lysine 157 each coordinate GTP. Residues lysine 191 and lysine 194 each participate in a glycyl lysine isopeptide (Lys-Gly) (interchain with G-Cter in ubiquitin) cross-link. Residues cysteine 205 and cysteine 207 are each lipidated (S-geranylgeranyl cysteine). Residue cysteine 207 is modified to Cysteine methyl ester.

This sequence belongs to the small GTPase superfamily. Rab family. In terms of assembly, interacts with NTRK1/TRKA. Interacts with RILP. Interacts with PSMA7. Interacts with RNF115. Interacts with FYCO1. Interacts with the PIK3C3/VPS34-PIK3R4 complex. The GTP-bound form interacts with OSBPL1A. The GTP-bound form interacts with RAC1. Interacts with CLN3. Interacts with CHM, the substrate-binding subunit of the Rab geranylgeranyltransferase complex. Interacts with C9orf72. Does not interact with HPS4 and the BLOC-3 complex (heterodimer of HPS1 and HPS4). Interacts with CLN5. Interacts with PLEKHM1 (via N- and C-terminus). Interacts with PRPH; the interaction is direct. Interacts with VPS13A. The GDP-bound form interacts with RIMOC1. Interacts with the MON1A-CCZ1B complex and this interaction is enhanced in the presence of RIMOC1. Interacts with VPS39 and VPS41. Forms a ternary complex with LAMP2 and RUFY4; the interaction with LAMP2 is mediated by RUFY4 (via RUN and coiled coil domains). It depends on Mg(2+) as a cofactor. In terms of processing, deubiquitination at Lys-191 and Lys-194 by USP32. Post-translationally, phosphorylated at Ser-72 by LRRK1; phosphorylation is dependent on protein kinase C (PKC) activation of LRRK1. Prenylated. Prenylation is required for association with cellular membranes.

The protein localises to the cytoplasmic vesicle. It localises to the phagosome membrane. Its subcellular location is the late endosome membrane. It is found in the lysosome membrane. The protein resides in the melanosome membrane. The protein localises to the autophagosome membrane. It localises to the lipid droplet. Its subcellular location is the endosome membrane. It is found in the mitochondrion membrane. It catalyses the reaction GTP + H2O = GDP + phosphate + H(+). Its activity is regulated as follows. Regulated by guanine nucleotide exchange factors (GEFs) which promote the exchange of bound GDP for free GTP. Regulated by GTPase activating proteins (GAPs) which increase the GTP hydrolysis activity. Inhibited by GDP dissociation inhibitors (GDIs). The small GTPases Rab are key regulators of intracellular membrane trafficking, from the formation of transport vesicles to their fusion with membranes. Rabs cycle between an inactive GDP-bound form and an active GTP-bound form that is able to recruit to membranes different sets of downstream effectors directly responsible for vesicle formation, movement, tethering and fusion. In its active state, RAB7A binds to a variety of effector proteins playing a key role in the regulation of endo-lysosomal trafficking. Governs early-to-late endosomal maturation, microtubule minus-end as well as plus-end directed endosomal migration and positioning, and endosome-lysosome transport through different protein-protein interaction cascades. Also plays a central role in growth-factor-mediated cell signaling, nutrient-transporter-mediated nutrient uptake, neurotrophin transport in the axons of neurons and lipid metabolism. Also involved in regulation of some specialized endosomal membrane trafficking, such as maturation of melanosomes, pathogen-induced phagosomes (or vacuoles) and autophagosomes. Plays a role in the maturation and acidification of phagosomes that engulf pathogens, such as S.aureus and Mycobacteria. Plays a role in the fusion of phagosomes with lysosomes. In concert with RAC1, plays a role in regulating the formation of RBs (ruffled borders) in osteoclasts. Controls the endosomal trafficking and neurite outgrowth signaling of NTRK1/TRKA. Regulates the endocytic trafficking of the EGF-EGFR complex by regulating its lysosomal degradation. Involved in the ADRB2-stimulated lipolysis through lipophagy, a cytosolic lipase-independent autophagic pathway. Required for the exosomal release of SDCBP, CD63 and syndecan. Required for vesicular trafficking and cell surface expression of ACE2. May play a role in PRPH neuronal intermediate filament assembly. This chain is Ras-related protein Rab-7a (RAB7A), found in Canis lupus familiaris (Dog).